We begin with the raw amino-acid sequence, 233 residues long: Cytidylate kinase (233 aa).

15–23 (GPSGAGKSS) is a binding site for ATP.

It belongs to the cytidylate kinase family. Type 1 subfamily.

It is found in the cytoplasm. It carries out the reaction CMP + ATP = CDP + ADP. It catalyses the reaction dCMP + ATP = dCDP + ADP. This chain is Cytidylate kinase, found in Citrifermentans bemidjiense (strain ATCC BAA-1014 / DSM 16622 / JCM 12645 / Bem) (Geobacter bemidjiensis).